The following is a 441-amino-acid chain: Fibroleukin (441 aa).

The first 15 residues, 1-15, serve as a signal peptide directing secretion; it reads MKLANWCWLSSTVLA. A glycan (N-linked (GlcNAc...) asparagine) is linked at Asn-25. A coiled-coil region spans residues 73–167; it reads SRIEEVFKEV…LEKLNLVNMN (95 aa). Positions 102–128 are disordered; the sequence is QADDSRDPGRNGLLLPGTGAPGETGDN. Residues Asn-179, Asn-237, Asn-265, and Asn-338 are each glycosylated (N-linked (GlcNAc...) asparagine). One can recognise a Fibrinogen C-terminal domain in the interval 206 to 438; the sequence is VQQHLIYKDC…EVKMMIRPKH (233 aa).

In terms of assembly, homotetramer; disulfide-linked.

The protein localises to the secreted. Its function is as follows. May play a role in physiologic lymphocyte functions at mucosal sites. The chain is Fibroleukin (FGL2) from Bos taurus (Bovine).